We begin with the raw amino-acid sequence, 204 residues long: Large ribosomal subunit protein eL15 (204 aa).

The interval valine 155–arginine 204 is disordered. A compositionally biased stretch (basic residues) spans asparagine 191–arginine 204.

It belongs to the eukaryotic ribosomal protein eL15 family.

The sequence is that of Large ribosomal subunit protein eL15 (rpl-15) from Caenorhabditis elegans.